The primary structure comprises 111 residues: Small ribosomal subunit protein bS16 (111 aa).

The interval 92–111 is disordered; the sequence is MEVKAKNRKARPSKKEDKEA.

Belongs to the bacterial ribosomal protein bS16 family.

The polypeptide is Small ribosomal subunit protein bS16 (Rickettsia massiliae (strain Mtu5)).